We begin with the raw amino-acid sequence, 369 residues long: Trans-enoyl reductase pyiC (369 aa).

52 to 55 serves as a coordination point for NADP(+); it reads CDYK. 137 to 144 provides a ligand contact to substrate; that stretch reads TGIGTLGM. NADP(+) contacts are provided by residues 195–198, Tyr-213, and 260–261; these read SPKN and LE. Residue 280 to 284 coordinates substrate; it reads GPLLL. 349–350 provides a ligand contact to NADP(+); that stretch reads VS.

This sequence belongs to the zinc-containing alcohol dehydrogenase family. Monomer.

Its pathway is mycotoxin biosynthesis. Its function is as follows. Trans-enoyl reductase; part of the gene cluster that mediates the biosynthesis of the mycotoxin pyrichalasin H, a tyrosine-derived cytochalasan that inhibits the growth of rice seedlings, but also inhibits lymphocyte capping and actin polymerization and alters cell morphology. Pyrichalasin H is indicated as the responsible agent for the genus-specific pathogenicity of M.grisea toward crabgrass. The first step in the pathway is catalyzed by the O-methyltransferase pyiA which methylates free tyrosine to generate the precursor O-methyltyrosine. The hybrid PKS-NRPS pyiS, assisted by the enoyl reductase pyiC, are responsible for fusion of the O-methyltyrosine precursor and the polyketide backbone. The polyketide synthase module (PKS) of pyiS is responsible for the synthesis of the polyketide backbone and the downstream nonribosomal peptide synthetase (NRPS) amidates the carboxyl end of the polyketide with the O-methyltyrosine precursor. As the NRPS A-domain demonstrates substrate tolerance, pyiS can also use phenylalanine, tyrosine and even para-chlorophenylalanine as amino acid precursor, which leads to the production of novel cytochalasans, including halogenated cytochalasans. Because pyiS lacks a designated enoylreductase (ER) domain, the required activity is provided the enoyl reductase pyiC. Reduction by the hydrolyase pyiE, followed by dehydration and intra-molecular Diels-Alder cyclization by the Diels-Alderase pyiF then yield the required isoindolone-fused macrocycle. The tailoring cytochrome P450 monooxygenases piyD and piyG catalyze the hydroxylation at C-18 and C-7, respectivily, whereas the short-chain dehydrogenase/reductase pyiH reduces the carbonyl at C-21 in preparation for the transfer of an acetyl group by the acetyltransferase pyiB. These 3 reactions whose order is not clear yet, lead to the production of O-methylpyrichalasin J, a deacetylated pyrichalasin H. Finally, pyiB to converts O-methylpyrichalasin J into the final product pyrichalasin H via acetylation of C-21. The chain is Trans-enoyl reductase pyiC from Pyricularia grisea (Crabgrass-specific blast fungus).